The primary structure comprises 253 residues: Small ribosomal subunit protein eS6 (253 aa).

Residues 200-253 form a disordered region; that stretch reads KKRLAKRKQSENDYAKLLAQRKKESKVRRQEELKRRRSASMRDSKSSDKSAPQK. Basic and acidic residues predominate over residues 226-247; sequence VRRQEELKRRRSASMRDSKSSD.

It belongs to the eukaryotic ribosomal protein eS6 family. As to quaternary structure, component of the small ribosomal subunit. Part of the small subunit (SSU) processome, composed of more than 70 proteins and the RNA chaperone small nucleolar RNA (snoRNA) U3. In terms of processing, ribosomal protein S6 is the major substrate of protein kinases in eukaryote ribosomes.

Its subcellular location is the cytoplasm. The protein resides in the nucleus. The protein localises to the nucleolus. In terms of biological role, component of the 40S small ribosomal subunit. Plays an important role in controlling cell growth and proliferation through the selective translation of particular classes of mRNA. Part of the small subunit (SSU) processome, first precursor of the small eukaryotic ribosomal subunit. During the assembly of the SSU processome in the nucleolus, many ribosome biogenesis factors, an RNA chaperone and ribosomal proteins associate with the nascent pre-rRNA and work in concert to generate RNA folding, modifications, rearrangements and cleavage as well as targeted degradation of pre-ribosomal RNA by the RNA exosome. This is Small ribosomal subunit protein eS6 (RpS6) from Spodoptera frugiperda (Fall armyworm).